Here is a 363-residue protein sequence, read N- to C-terminus: Galactokinase (363 aa).

Residue 16–19 coordinates substrate; it reads EHTD. ATP contacts are provided by residues Ser-50 and 103–109; that span reads GSGLSSS. Mg(2+)-binding residues include Ser-109 and Glu-141. The active-site Proton acceptor is Asp-153. Position 205 (Tyr-205) interacts with substrate.

Belongs to the GHMP kinase family. GalK subfamily.

The protein localises to the cytoplasm. The enzyme catalyses alpha-D-galactose + ATP = alpha-D-galactose 1-phosphate + ADP + H(+). It participates in carbohydrate metabolism; galactose metabolism. In terms of biological role, catalyzes the transfer of the gamma-phosphate of ATP to D-galactose to form alpha-D-galactose-1-phosphate (Gal-1-P). The sequence is that of Galactokinase from Mycobacterium tuberculosis (strain ATCC 25177 / H37Ra).